Reading from the N-terminus, the 194-residue chain is Peptidyl-tRNA hydrolase (194 aa).

TRNA is bound at residue Tyr17. The Proton acceptor role is filled by His22. 3 residues coordinate tRNA: Tyr68, Asn70, and Asn115.

It belongs to the PTH family. As to quaternary structure, monomer.

Its subcellular location is the cytoplasm. It catalyses the reaction an N-acyl-L-alpha-aminoacyl-tRNA + H2O = an N-acyl-L-amino acid + a tRNA + H(+). Hydrolyzes ribosome-free peptidyl-tRNAs (with 1 or more amino acids incorporated), which drop off the ribosome during protein synthesis, or as a result of ribosome stalling. Its function is as follows. Catalyzes the release of premature peptidyl moieties from peptidyl-tRNA molecules trapped in stalled 50S ribosomal subunits, and thus maintains levels of free tRNAs and 50S ribosomes. The chain is Peptidyl-tRNA hydrolase from Pseudoalteromonas atlantica (strain T6c / ATCC BAA-1087).